The chain runs to 245 residues: Aquaporin SIP1-1 (245 aa).

Transmembrane regions (helical) follow at residues 14 to 34 (AVVT…TAAV) and 55 to 75 (LLSV…GASF). Positions 76–78 (NPT) match the NPA 1 motif. A run of 3 helical transmembrane segments spans residues 100-120 (FPAQ…LMPA), 138-158 (GALA…WVIV), and 164-184 (VILK…AGAE). The NPA 2 motif lies at 191–193 (NPA). Residues 213–233 (VYWICPFIGAMLAGWIFRVVF) traverse the membrane as a helical segment.

This sequence belongs to the MIP/aquaporin (TC 1.A.8) family. SIP (TC 1.A.8.10) subfamily.

It is found in the membrane. In terms of biological role, aquaporins facilitate the transport of water and small neutral solutes across cell membranes. This Zea mays (Maize) protein is Aquaporin SIP1-1 (SIP1-1).